Here is a 544-residue protein sequence, read N- to C-terminus: Chaperonin GroEL (544 aa).

Residues 30-33 (TLGP), lysine 51, 87-91 (DGTTT), glycine 415, and aspartate 495 each bind ATP.

Belongs to the chaperonin (HSP60) family. In terms of assembly, forms a cylinder of 14 subunits composed of two heptameric rings stacked back-to-back. Interacts with the co-chaperonin GroES.

It is found in the cytoplasm. It catalyses the reaction ATP + H2O + a folded polypeptide = ADP + phosphate + an unfolded polypeptide.. In terms of biological role, together with its co-chaperonin GroES, plays an essential role in assisting protein folding. The GroEL-GroES system forms a nano-cage that allows encapsulation of the non-native substrate proteins and provides a physical environment optimized to promote and accelerate protein folding. The polypeptide is Chaperonin GroEL (Neisseria meningitidis serogroup A / serotype 4A (strain DSM 15465 / Z2491)).